A 253-amino-acid polypeptide reads, in one-letter code: 5'-nucleotidase SurE (253 aa).

Residues D8, D9, S40, and N93 each coordinate a divalent metal cation.

Belongs to the SurE nucleotidase family. It depends on a divalent metal cation as a cofactor.

It is found in the cytoplasm. It carries out the reaction a ribonucleoside 5'-phosphate + H2O = a ribonucleoside + phosphate. Nucleotidase that shows phosphatase activity on nucleoside 5'-monophosphates. The protein is 5'-nucleotidase SurE of Haemophilus ducreyi (strain 35000HP / ATCC 700724).